A 212-amino-acid chain; its full sequence is uncharacterized protein (212 aa).

Residues 42–101 (GITGPKATKSPSRRTTRSPSPSRRTTRSSPSRRTTRSSPSRRTTRSPSPSGRRKQGGPAV) form a disordered region. Low complexity predominate over residues 58-91 (RSPSPSRRTTRSSPSRRTTRSSPSRRTTRSPSPS).

This sequence belongs to the IIV-6 378R family.

This is an uncharacterized protein from Invertebrate iridescent virus 3 (IIV-3).